Consider the following 303-residue polypeptide: Aspartate carbamoyltransferase catalytic subunit (303 aa).

2 residues coordinate carbamoyl phosphate: Arg54 and Thr55. Lys83 serves as a coordination point for L-aspartate. 3 residues coordinate carbamoyl phosphate: Arg104, His132, and Gln135. Positions 164 and 226 each coordinate L-aspartate. 2 residues coordinate carbamoyl phosphate: Leu265 and Pro266.

The protein belongs to the aspartate/ornithine carbamoyltransferase superfamily. ATCase family. Heterooligomer of catalytic and regulatory chains.

It carries out the reaction carbamoyl phosphate + L-aspartate = N-carbamoyl-L-aspartate + phosphate + H(+). It functions in the pathway pyrimidine metabolism; UMP biosynthesis via de novo pathway; (S)-dihydroorotate from bicarbonate: step 2/3. Functionally, catalyzes the condensation of carbamoyl phosphate and aspartate to form carbamoyl aspartate and inorganic phosphate, the committed step in the de novo pyrimidine nucleotide biosynthesis pathway. The polypeptide is Aspartate carbamoyltransferase catalytic subunit (Methanocorpusculum labreanum (strain ATCC 43576 / DSM 4855 / Z)).